Here is a 700-residue protein sequence, read N- to C-terminus: Elongation factor G (700 aa).

Residues 8–290 (ERYRNIGISA…AVIDYLPSPV (283 aa)) form the tr-type G domain. GTP is bound by residues 17–24 (AHIDAGKT), 88–92 (DTPGH), and 142–145 (NKMD).

This sequence belongs to the TRAFAC class translation factor GTPase superfamily. Classic translation factor GTPase family. EF-G/EF-2 subfamily.

Its subcellular location is the cytoplasm. Its function is as follows. Catalyzes the GTP-dependent ribosomal translocation step during translation elongation. During this step, the ribosome changes from the pre-translocational (PRE) to the post-translocational (POST) state as the newly formed A-site-bound peptidyl-tRNA and P-site-bound deacylated tRNA move to the P and E sites, respectively. Catalyzes the coordinated movement of the two tRNA molecules, the mRNA and conformational changes in the ribosome. The protein is Elongation factor G of Leptothrix cholodnii (strain ATCC 51168 / LMG 8142 / SP-6) (Leptothrix discophora (strain SP-6)).